The primary structure comprises 148 residues: L-alanine exporter AlaE (148 aa).

The next 4 helical transmembrane spans lie at 18–38, 49–69, 88–108, and 115–135; these read FALV…ISGM, VSIP…DAFI, LLAY…SVGA, and TAVA…GYFL.

It belongs to the AlaE exporter family.

The protein resides in the cell inner membrane. In terms of biological role, exports L-alanine. The protein is L-alanine exporter AlaE of Yersinia enterocolitica subsp. palearctica serotype O:3 (strain DSM 13030 / CIP 106945 / Y11).